The sequence spans 465 residues: 3-isopropylmalate dehydratase large subunit (465 aa).

Positions 346, 406, and 409 each coordinate [4Fe-4S] cluster.

This sequence belongs to the aconitase/IPM isomerase family. LeuC type 1 subfamily. In terms of assembly, heterodimer of LeuC and LeuD. It depends on [4Fe-4S] cluster as a cofactor.

It carries out the reaction (2R,3S)-3-isopropylmalate = (2S)-2-isopropylmalate. It functions in the pathway amino-acid biosynthesis; L-leucine biosynthesis; L-leucine from 3-methyl-2-oxobutanoate: step 2/4. Catalyzes the isomerization between 2-isopropylmalate and 3-isopropylmalate, via the formation of 2-isopropylmaleate. This is 3-isopropylmalate dehydratase large subunit from Leptospira interrogans serogroup Icterohaemorrhagiae serovar copenhageni (strain Fiocruz L1-130).